The chain runs to 333 residues: D-lactate dehydrogenase (333 aa).

Residues 156–157, D176, 207–208, N213, 234–236, and D260 contribute to the NAD(+) site; these read HI, VP, and VSR. R236 is a catalytic residue. E265 is a catalytic residue. H297 acts as the Proton donor in catalysis.

Belongs to the D-isomer specific 2-hydroxyacid dehydrogenase family. Homodimer.

It carries out the reaction (R)-lactate + NAD(+) = pyruvate + NADH + H(+). The protein is D-lactate dehydrogenase (ldhA) of Lactobacillus delbrueckii subsp. bulgaricus (strain ATCC 11842 / DSM 20081 / BCRC 10696 / JCM 1002 / NBRC 13953 / NCIMB 11778 / NCTC 12712 / WDCM 00102 / Lb 14).